The chain runs to 471 residues: UDP-N-acetylmuramate--L-alanine ligase (471 aa).

114–120 (GTHGKTT) is an ATP binding site.

It belongs to the MurCDEF family.

Its subcellular location is the cytoplasm. It catalyses the reaction UDP-N-acetyl-alpha-D-muramate + L-alanine + ATP = UDP-N-acetyl-alpha-D-muramoyl-L-alanine + ADP + phosphate + H(+). It participates in cell wall biogenesis; peptidoglycan biosynthesis. Functionally, cell wall formation. In Rhizobium etli (strain ATCC 51251 / DSM 11541 / JCM 21823 / NBRC 15573 / CFN 42), this protein is UDP-N-acetylmuramate--L-alanine ligase.